Reading from the N-terminus, the 278-residue chain is 4-deoxy-L-threo-5-hexosulose-uronate ketol-isomerase (278 aa).

Positions 196, 198, 203, and 245 each coordinate Zn(2+).

This sequence belongs to the KduI family. Zn(2+) serves as cofactor.

The enzyme catalyses 5-dehydro-4-deoxy-D-glucuronate = 3-deoxy-D-glycero-2,5-hexodiulosonate. It functions in the pathway glycan metabolism; pectin degradation; 2-dehydro-3-deoxy-D-gluconate from pectin: step 4/5. Its function is as follows. Catalyzes the isomerization of 5-dehydro-4-deoxy-D-glucuronate to 3-deoxy-D-glycero-2,5-hexodiulosonate. The chain is 4-deoxy-L-threo-5-hexosulose-uronate ketol-isomerase from Burkholderia cenocepacia (strain ATCC BAA-245 / DSM 16553 / LMG 16656 / NCTC 13227 / J2315 / CF5610) (Burkholderia cepacia (strain J2315)).